The following is a 381-amino-acid chain: 1-deoxy-D-xylulose 5-phosphate reductoisomerase (381 aa).

NADPH contacts are provided by Thr-10, Gly-11, Ser-12, Ile-13, Gly-36, Lys-37, Asn-38, and Asn-122. Residue Lys-123 participates in 1-deoxy-D-xylulose 5-phosphate binding. Glu-124 contributes to the NADPH binding site. Mn(2+) is bound at residue Asp-148. Ser-149, Glu-150, Ser-173, and His-196 together coordinate 1-deoxy-D-xylulose 5-phosphate. Glu-150 is a Mn(2+) binding site. Gly-202 serves as a coordination point for NADPH. Residues Ser-209, Asn-214, Lys-215, and Glu-218 each coordinate 1-deoxy-D-xylulose 5-phosphate. Glu-218 contacts Mn(2+).

This sequence belongs to the DXR family. It depends on Mg(2+) as a cofactor. Mn(2+) is required as a cofactor.

The catalysed reaction is 2-C-methyl-D-erythritol 4-phosphate + NADP(+) = 1-deoxy-D-xylulose 5-phosphate + NADPH + H(+). It participates in isoprenoid biosynthesis; isopentenyl diphosphate biosynthesis via DXP pathway; isopentenyl diphosphate from 1-deoxy-D-xylulose 5-phosphate: step 1/6. In terms of biological role, catalyzes the NADPH-dependent rearrangement and reduction of 1-deoxy-D-xylulose-5-phosphate (DXP) to 2-C-methyl-D-erythritol 4-phosphate (MEP). This Desulfitobacterium hafniense (strain DSM 10664 / DCB-2) protein is 1-deoxy-D-xylulose 5-phosphate reductoisomerase.